Here is a 466-residue protein sequence, read N- to C-terminus: Alpha-1,3-mannosyltransferase CMT1 (466 aa).

Residues 1–23 are disordered; it reads MFRNTLRTFPRPATPSLPTSSHS. Over 1 to 33 the chain is Cytoplasmic; the sequence is MFRNTLRTFPRPATPSLPTSSHSPIARASLSKS. Residues 34–54 form a helical; Signal-anchor for type II membrane protein membrane-spanning segment; it reads PLFVLSLVLVCIFFLSFLSHP. At 55–466 the chain is on the lumenal side; that stretch reads DPSARKLQWP…ETRWVQPWLE (412 aa).

The cofactor is Mg(2+). Mn(2+) serves as cofactor. Requires Co(2+) as cofactor.

It localises to the golgi apparatus membrane. Its pathway is protein modification; protein glycosylation. Its function is as follows. Responsible for addition of mannose residues in an alpha-1,3 linkage to a polymannosly precursor. May be involved in synthesis of capsule glucuronoxylomannan. In Cryptococcus neoformans var. neoformans serotype D (strain JEC21 / ATCC MYA-565) (Filobasidiella neoformans), this protein is Alpha-1,3-mannosyltransferase CMT1.